Reading from the N-terminus, the 198-residue chain is Putative nitroreductase MJ1384 (198 aa).

The protein belongs to the nitroreductase family. Requires FMN as cofactor.

The chain is Putative nitroreductase MJ1384 from Methanocaldococcus jannaschii (strain ATCC 43067 / DSM 2661 / JAL-1 / JCM 10045 / NBRC 100440) (Methanococcus jannaschii).